Here is a 134-residue protein sequence, read N- to C-terminus: Bradykinin-related peptides (134 aa).

The signal sequence occupies residues 1–22 (MAFLKKSLFLVLFLGVVSLSFC). 3 propeptides span residues 23 to 44 (EEEKREEHEEEKRDEEDAESLG), 71 to 82 (RSISGLTPIRLS), and 99 to 121 (ISEADPGFTPSFVVIKGLSPLRG). The segment covering 24–33 (EEKREEHEEE) has biased composition (basic and acidic residues). A disordered region spans residues 24–71 (EEKREEHEEEKRDEEDAESLGKRYGGLSPLRISKRVPPGFTPFRSPAR). Pro-126 carries the 4-hydroxyproline; partial; in form [Hyp3]-bradykinin and [Hyp3]-bradykinin-Val,Asp modification.

The protein belongs to the frog skin active peptide (FSAP) family. Bradykinin-related peptide subfamily. In terms of tissue distribution, expressed by the skin glands. Expression levels in inguinal glands are much higher than in granular glands.

Its subcellular location is the secreted. May produce in vitro relaxation of rat arterial smooth muscle and constriction of intestinal smooth muscle. May target bradykinin receptors (BDKRB). This chain is Bradykinin-related peptides, found in Physalaemus nattereri (Cuyaba dwarf frog).